The following is a 39-amino-acid chain: SPbeta prophage-derived uncharacterized protein YorT (39 aa).

The protein is SPbeta prophage-derived uncharacterized protein YorT (yorT) of Bacillus subtilis (strain 168).